Reading from the N-terminus, the 101-residue chain is Defensin-like protein 222 (101 aa).

An N-terminal signal peptide occupies residues 1–21 (MRTIVLFSTLMILVLSCMSNA). Intrachain disulfides connect C68–C85, C71–C90, and C75–C92.

Belongs to the DEFL family.

Its subcellular location is the secreted. This Arabidopsis thaliana (Mouse-ear cress) protein is Defensin-like protein 222.